The chain runs to 267 residues: Proenkephalin-A (267 aa).

Positions Met1–Ala24 are cleaved as a signal peptide. Intrachain disulfides connect Cys26–Cys48, Cys30–Cys52, and Cys33–Cys65. Residues Thr163–Gly175 show a composition bias toward basic and acidic residues. A disordered region spans residues Thr163 to Val182. 2 consecutive propeptides follow at residues Ser196–Gln207 and Val217–Gln227. Phosphoserine is present on Ser251.

The protein belongs to the opioid neuropeptide precursor family. Post-translationally, proenkephalin-A is cleaved by CTSL to generate Met-enkephalin. Processed and degraded by ACE. In terms of processing, probably cleaved by ACE. Post-translationally, processed by ACE to generate Met-enkephalin in the nucleus accumbens of the brain. The N-terminal domain contains 6 conserved cysteines thought to be involved in disulfide bonding and/or processing.

It is found in the cytoplasmic vesicle. The protein resides in the secretory vesicle. It localises to the chromaffin granule lumen. Its subcellular location is the secreted. Its function is as follows. Neuropeptide that competes with and mimic the effects of opiate drugs. They play a role in a number of physiologic functions, including pain perception and responses to stress. In terms of biological role, met-enkephalin-Arg-Phe neuropeptide acts as a strong ligand of Mu-type opioid receptor OPRM1. Met-enkephalin-Arg-Phe-binding to OPRM1 in the nucleus accumbens of the brain increases activation of OPRM1, leading to long-term synaptic depression of glutamate release. Increases glutamate release in the striatum and decreases GABA concentration in the striatum. Functionally, increases glutamate release in the striatum. The protein is Proenkephalin-A of Homo sapiens (Human).